We begin with the raw amino-acid sequence, 350 residues long: Putative ATP-binding protein BruAb2_0487 (350 aa).

An ABC transporter domain is found at 4-234 (VSLRGISKTF…PANKFVAGFI (231 aa)). 36–43 (GPSGCGKS) contributes to the ATP binding site.

It belongs to the ABC transporter superfamily. In terms of assembly, the complex is composed of two ATP-binding proteins (BruAb2_0487), two transmembrane proteins (BruAb2_0483) and a solute-binding protein (BruAb2_0484).

Its subcellular location is the cell inner membrane. Its function is as follows. Probably part of an ABC transporter complex. Probably responsible for energy coupling to the transport system. The sequence is that of Putative ATP-binding protein BruAb2_0487 from Brucella abortus biovar 1 (strain 9-941).